The chain runs to 458 residues: Tissue-resident T-cell transcription regulator protein ZNF683 (458 aa).

Disordered stretches follow at residues 84–109 and 249–275; these read PQDLGEDASNMRHQPPSLYKASTDSE and TLHSQVESRSSRDTRTPGQAGVAAPTR. 3 consecutive C2H2-type zinc fingers follow at residues 301 to 323, 329 to 351, and 357 to 379; these read YECNVCGKNFGQLSNLKVHLRVH, FQCALCQKRFTQLAHLQKHHLVH, and HQCQVCHKRFSSSSNLKTHLRLH.

This sequence belongs to the krueppel C2H2-type zinc-finger protein family. Expressed in tissue-resident memory T (Trm) cell population in non-lymphoid organs, such as skin and gut. Expressed in innate lymphocytes, including tissue-resident natural killer (trNK) and natural killer T (NKT) cells in thymus, spleen and liver.

The protein resides in the nucleus. In terms of biological role, transcription factor that mediates a transcriptional program in various innate and adaptive immune tissue-resident lymphocyte T-cell types such as tissue-resident memory T (Trm), natural killer (trNK) and natural killer T (NKT) cells and negatively regulates gene expression of proteins that promote the egress of tissue-resident T-cell populations from non-lymphoid organs. Plays a role in the development, retention and long-term establishment of adaptive and innate tissue-resident lymphocyte T-cell types in non-lymphoid organs, such as the skin and gut, but also in other nonbarrier tissues like liver and kidney, and therefore may provide immediate immunological protection against reactivating infections or viral reinfection. Also plays a role in the differentiation of both thymic and peripheral NKT cells. Negatively regulates the accumulation of interferon-gamma (IFN-gamma) in NKT cells at steady state or after antigenic stimulation. Positively regulates granzyme B production in NKT cells after innate stimulation. Associates with the transcriptional repressor PRDM1/BLIMP1 to chromatin at gene promoter regions. This chain is Tissue-resident T-cell transcription regulator protein ZNF683, found in Mus musculus (Mouse).